The sequence spans 151 residues: 3-hydroxyacyl-[acyl-carrier-protein] dehydratase FabZ (151 aa).

Histidine 56 is an active-site residue.

Belongs to the thioester dehydratase family. FabZ subfamily.

Its subcellular location is the cytoplasm. It carries out the reaction a (3R)-hydroxyacyl-[ACP] = a (2E)-enoyl-[ACP] + H2O. In terms of biological role, involved in unsaturated fatty acids biosynthesis. Catalyzes the dehydration of short chain beta-hydroxyacyl-ACPs and long chain saturated and unsaturated beta-hydroxyacyl-ACPs. In Rhodopseudomonas palustris (strain BisB18), this protein is 3-hydroxyacyl-[acyl-carrier-protein] dehydratase FabZ.